A 107-amino-acid chain; its full sequence is Putative double-stranded DNA mimic protein NTHI1680 (107 aa).

It belongs to the putative dsDNA mimic protein family.

Functionally, may act as a double-stranded DNA (dsDNA) mimic. Probably regulates the activity of a dsDNA-binding protein. The polypeptide is Putative double-stranded DNA mimic protein NTHI1680 (Haemophilus influenzae (strain 86-028NP)).